The following is a 320-amino-acid chain: Malate dehydrogenase (320 aa).

NAD(+) is bound by residues 10–15 (GSGMIG) and Asp-34. The substrate site is built by Arg-83 and Arg-89. NAD(+)-binding positions include Asn-96 and 119 to 121 (ITN). Substrate contacts are provided by Asn-121 and Arg-152. The active-site Proton acceptor is His-176.

The protein belongs to the LDH/MDH superfamily. MDH type 3 family.

It catalyses the reaction (S)-malate + NAD(+) = oxaloacetate + NADH + H(+). Its function is as follows. Catalyzes the reversible oxidation of malate to oxaloacetate. The protein is Malate dehydrogenase of Brucella abortus (strain S19).